The primary structure comprises 168 residues: Group IIF secretory phospholipase A2 (168 aa).

Residues 1–20 form the signal peptide; that stretch reads MKKFFTVAILAGSVLSTAHG. Cystine bridges form between cysteine 46-cysteine 138, cysteine 48-cysteine 64, cysteine 63-cysteine 120, cysteine 69-cysteine 145, cysteine 70-cysteine 113, cysteine 79-cysteine 106, and cysteine 98-cysteine 111. Ca(2+)-binding residues include tyrosine 47, glycine 49, and glycine 51. The active site involves histidine 67. Aspartate 68 contacts Ca(2+). 2 N-linked (GlcNAc...) asparagine glycosylation sites follow: asparagine 92 and asparagine 102. Residue aspartate 114 is part of the active site. Residues asparagine 123 and asparagine 144 are each glycosylated (N-linked (GlcNAc...) asparagine). The tract at residues 139 to 168 is required for localization on the plasma membrane; that stretch reads QGPTPNCSIYEPPPEEVTCSHQSPAPPAPP.

Belongs to the phospholipase A2 family. It depends on Ca(2+) as a cofactor. Expressed at high levels in placenta, testis, thymus and at lower levels in heart, kidney, liver and prostate. Highly expressed in rheumatoid arthritic tissues, including synovial lining cells in the intima, capillary endothelial cells and plasma cells.

The protein localises to the secreted. It is found in the cell membrane. The enzyme catalyses a 1,2-diacyl-sn-glycero-3-phosphocholine + H2O = a 1-acyl-sn-glycero-3-phosphocholine + a fatty acid + H(+). The catalysed reaction is 1-hexadecanoyl-2-(9Z-octadecenoyl)-sn-glycero-3-phospho-(1'-sn-glycerol) + H2O = 1-hexadecanoyl-sn-glycero-3-phospho-(1'-sn-glycerol) + (9Z)-octadecenoate + H(+). It carries out the reaction 1-hexadecanoyl-2-(9Z,12Z-octadecadienoyl)-sn-glycero-3-phosphoethanolamine + H2O = 1-hexadecanoyl-sn-glycero-3-phosphoethanolamine + (9Z,12Z)-octadecadienoate + H(+). It catalyses the reaction 1-hexadecanoyl-2-(5Z,8Z,11Z,14Z-eicosatetraenoyl)-sn-glycero-3-phosphoethanolamine + H2O = 1-hexadecanoyl-sn-glycero-3-phosphoethanolamine + (5Z,8Z,11Z,14Z)-eicosatetraenoate + H(+). The enzyme catalyses 1-hexadecanoyl-2-(9Z-octadecenoyl)-sn-glycero-3-phosphocholine + H2O = 1-hexadecanoyl-sn-glycero-3-phosphocholine + (9Z)-octadecenoate + H(+). The catalysed reaction is 1-hexadecanoyl-2-(9Z-octadecenoyl)-sn-glycero-3-phospho-L-serine + H2O = 1-hexadecanoyl-sn-glycero-3-phospho-L-serine + (9Z)-octadecenoate + H(+). Secretory calcium-dependent phospholipase A2 that primarily targets extracellular phospholipids. Hydrolyzes the ester bond of the fatty acyl group attached at the sn-2 position of phospholipids (phospholipase A2 activity), the catalytic efficiency decreasing in the following order: phosphatidylglycerols &gt; phosphatidylethanolamines &gt; phosphatidylcholines &gt; phosphatidylserines. May play a role in lipid mediator production in inflammatory conditions, by providing arachidonic acid to downstream cyclooxygenases and lipoxygenases. The sequence is that of Group IIF secretory phospholipase A2 (PLA2G2F) from Homo sapiens (Human).